The sequence spans 123 residues: Small ribosomal subunit protein uS13 (123 aa).

Positions 93-123 (RRNLPVRGQKTKTNARTRKGPKRAIGGKKKK) are disordered.

It belongs to the universal ribosomal protein uS13 family. As to quaternary structure, part of the 30S ribosomal subunit. Forms a loose heterodimer with protein S19. Forms two bridges to the 50S subunit in the 70S ribosome.

Functionally, located at the top of the head of the 30S subunit, it contacts several helices of the 16S rRNA. In the 70S ribosome it contacts the 23S rRNA (bridge B1a) and protein L5 of the 50S subunit (bridge B1b), connecting the 2 subunits; these bridges are implicated in subunit movement. Contacts the tRNAs in the A and P-sites. This chain is Small ribosomal subunit protein uS13, found in Clostridium botulinum (strain Kyoto / Type A2).